The primary structure comprises 262 residues: Diphthine synthase (262 aa).

Residues Leu-10, Asp-87, Val-90, Ser-115–Ile-116, Leu-166, Ala-209, and His-234 contribute to the S-adenosyl-L-methionine site.

It belongs to the diphthine synthase family. Homodimer.

It carries out the reaction 2-[(3S)-amino-3-carboxypropyl]-L-histidyl-[translation elongation factor 2] + 3 S-adenosyl-L-methionine = diphthine-[translation elongation factor 2] + 3 S-adenosyl-L-homocysteine + 3 H(+). Its pathway is protein modification; peptidyl-diphthamide biosynthesis. Functionally, S-adenosyl-L-methionine-dependent methyltransferase that catalyzes the trimethylation of the amino group of the modified target histidine residue in translation elongation factor 2 (EF-2), to form an intermediate called diphthine. The three successive methylation reactions represent the second step of diphthamide biosynthesis. In Pyrococcus abyssi (strain GE5 / Orsay), this protein is Diphthine synthase.